We begin with the raw amino-acid sequence, 142 residues long: MSFLTVPYKLPVSLSVGSCVIIKGTLIDSSINEPQLQVDFYTEMNEDSEIAFHLRVHLGRRVVMNSREFGIWMLEENLHYVPFEDGKPFDLRIYVCHNEYEVKVNGEYIYAFVHRIPPSYVKMIQVWRDVSLDSVLVNNGRR.

Positions 6–138 constitute a Galectin domain; that stretch reads VPYKLPVSLS…DVSLDSVLVN (133 aa).

Predominantly and highly expressed in the placenta where it is localized mainly in the syncytiotrophoblast and in the endothelia of fetal vessels. Also detected in the amnion and chorionic trophoblasts in fetal membranes.

Functionally, binds lactose with high affinity. Strong inducer of T-cell apoptosis. In Homo sapiens (Human), this protein is Galectin-16.